The chain runs to 271 residues: Proteasome inhibitor PI31 subunit (271 aa).

N-acetylalanine is present on Ala2. The interval 2–150 is important for homodimerization and interaction with FBXO7; it reads AGLEVLFASA…PIHEQWEKVR (149 aa). A phosphoserine mark is found at Ser153 and Ser189. Arg205 carries the post-translational modification Omega-N-methylarginine. Arg219 is subject to Asymmetric dimethylarginine. The interval 221–271 is disordered; that stretch reads LIDPSSGLPNRLPPGAVPPGARFDPFGPIGTSPSGPNPDHLPPPGYDDMYL. Arg231 carries the post-translational modification Omega-N-methylarginine. Position 252 is a phosphoserine (Ser252). The segment covering 255-265 has biased composition (pro residues); it reads GPNPDHLPPPG.

It belongs to the proteasome inhibitor PI31 family. As to quaternary structure, monomer and homodimer. Interacts with FBXO7.

It is found in the cytoplasm. The protein localises to the endoplasmic reticulum. Functionally, plays an important role in control of proteasome function. Inhibits the hydrolysis of protein and peptide substrates by the 20S proteasome. Also inhibits the activation of the proteasome by the proteasome regulatory proteins PA700 and PA28. This chain is Proteasome inhibitor PI31 subunit (Psmf1), found in Rattus norvegicus (Rat).